The primary structure comprises 186 residues: MGKNLGLVVSFYLCITFALGEYFSETRPITPKQLVVTNLHFFFHDTLTAPNPSAILIAKPTHTRGDNDSSPSPFGSLFALDDPLTVGPDPKSEKIGNARGMYVSSGKHVPTLTMYVDFGFTSGKFNGSSIAVFSRNTITEKEREVAVVGGRGRFRMARGVAQLNTYYVNLTNGDAIVEYNVTLYHY.

Positions 1 to 20 (MGKNLGLVVSFYLCITFALG) are cleaved as a signal peptide. 4 N-linked (GlcNAc...) asparagine glycosylation sites follow: N67, N126, N169, and N180.

This sequence belongs to the plant dirigent protein family. In terms of assembly, homodimer.

It is found in the secreted. Its subcellular location is the extracellular space. The protein resides in the apoplast. In terms of biological role, dirigent proteins impart stereoselectivity on the phenoxy radical-coupling reaction, yielding optically active lignans from two molecules of coniferyl alcohol in the biosynthesis of lignans, flavonolignans, and alkaloids and thus plays a central role in plant secondary metabolism. The sequence is that of Dirigent protein 4 (DIR4) from Arabidopsis thaliana (Mouse-ear cress).